The chain runs to 124 residues: PPKDDKKKKDAGKSAKKDKDPVNKSGGKAKKKKWSKGKVRDKLNNLVLFDKATYDKLCKEVPNYKLITPAVVSERLKIRGSLARAALQELLSKGLIKLVSKHRAQVIYTRNTKGGDAPAAGEDA.

Residues 1–22 are compositionally biased toward basic and acidic residues; sequence PPKDDKKKKDAGKSAKKDKDPV. Residues 1–37 form a disordered region; sequence PPKDDKKKKDAGKSAKKDKDPVNKSGGKAKKKKWSKG. The span at 27-37 shows a compositional bias: basic residues; that stretch reads GKAKKKKWSKG. Residue lysine 42 is modified to N6-acetyllysine. Lysine 51 is modified (N6-acetyllysine; alternate). Residue lysine 51 is modified to N6-succinyllysine; alternate. 2 positions are modified to N6-acetyllysine: lysine 59 and lysine 65. Lysine 93 carries the post-translational modification N6-acetyllysine; alternate. Position 93 is an N6-succinyllysine; alternate (lysine 93).

The protein belongs to the eukaryotic ribosomal protein eS25 family. In terms of assembly, component of the small ribosomal subunit.

Its subcellular location is the cytoplasm. In terms of biological role, component of the small ribosomal subunit. The ribosome is a large ribonucleoprotein complex responsible for the synthesis of proteins in the cell. This is Small ribosomal subunit protein eS25 (RPS25) from Oryctolagus cuniculus (Rabbit).